The sequence spans 363 residues: Peroxidase (363 aa).

An N-terminal signal peptide occupies residues methionine 1 to proline 20. Residue glutamine 21 is modified to Pyrrolidone carboxylic acid. 4 cysteine pairs are disulfide-bonded: cysteine 31/cysteine 43, cysteine 42/cysteine 312, cysteine 62/cysteine 148, and cysteine 276/cysteine 341. Catalysis depends on histidine 75, which acts as the Proton acceptor. Ca(2+)-binding residues include aspartate 76, glycine 94, aspartate 96, and serine 98. Asparagine 162 carries N-linked (GlcNAc...) (high mannose) asparagine glycosylation. Histidine 203 provides a ligand contact to heme b. 5 residues coordinate Ca(2+): serine 204, aspartate 221, threonine 223, valine 226, and aspartate 228. Serine 358 carries O-linked (Man...) serine glycosylation.

This sequence belongs to the peroxidase family. Ligninase subfamily. It depends on Ca(2+) as a cofactor. Requires heme b as cofactor.

Its subcellular location is the secreted. The enzyme catalyses 2 a phenolic donor + H2O2 = 2 a phenolic radical donor + 2 H2O. The protein is Peroxidase (CIP1) of Coprinopsis cinerea (strain Okayama-7 / 130 / ATCC MYA-4618 / FGSC 9003) (Inky cap fungus).